The following is an 878-amino-acid chain: MSYLNLRLYQRNTQCLHIRKHRLAGFFVRLVVACAFAAQAPLSSADLYFNPRFLADDPQAVADLSRFENGQELPPGTYRVDIYLNNGYMATRDVTFNTGDSEQGIVPCLTRAQLASMGLNTASVAGMNLLADDACVPLTTMVQDATAHLDVGQQRLNLTIPQAFMSNRARGYIPPELWDPGINAGLLNYNFSGNSVQNRIGGNSHYAYLNLQSGLNIGAWRLRDNTTWSYNSSDRSSGSKNKWQHINTWLERDIIPLRSRLTLGDGYTQGDIFDGINFRGAQLASDDNMLPDSQRGFAPVIHGIARGTAQVTIKQNGYDIYNSTVPPGPFTINDIYAAGNSGDLQVTIKEADGSTQIFTVPYSSVPLLQREGHTRYSITAGEYRSGNAQQEKTRFFQSTLLHGLPAGWTIYGGTQLADRYRAFNFGIGKNMGALGALSVDMTQANSTLPDDSQHDGQSVRFLYNKSLNESGTNIQLVGYRYSTSGYFNFADTTYSRMNGYNIETQDGVIQVKPKFTDYYNLAYNKRGKLQLTVTQQLGRTSTLYLSGSHQTYWGTSNVDEQFQAGLNTAFEDINWTLSYSLTKNAWQKGRDQMLALNVNIPFSHWLRSDSKSQWRHASASYSMSHDLNGRMTNLAGVYGTLLEDNNLSYSVQTGYAGGGDGNSGSTGYATLNYRGGYGNANIGYSHSDDIKQLYYGVSGGVLAHANGVTLGQPLNDTVVLVKAPGAKDAKVENQTGVRTDWRGYAVLPYATEYRENRVALDTNTLADNVDLDNAVANVVPTRGAIVRAEFKARVGIKLLMTLTHNNKPLPFGAMVTSESSQSSGIVADNGQVYLSGMPLAGKVQVKWGEEENAHCVANYQLPPESQQQLLTQLSAECR.

The first 45 residues, 1 to 45, serve as a signal peptide directing secretion; it reads MSYLNLRLYQRNTQCLHIRKHRLAGFFVRLVVACAFAAQAPLSSA. Cysteine 855 and cysteine 877 are disulfide-bonded.

This sequence belongs to the fimbrial export usher family.

It is found in the cell outer membrane. Involved in the export and assembly of FimA fimbrial subunits across the outer membrane. The sequence is that of Outer membrane usher protein FimD (fimD) from Escherichia coli (strain K12).